Here is a 425-residue protein sequence, read N- to C-terminus: Histidine--tRNA ligase (425 aa).

It belongs to the class-II aminoacyl-tRNA synthetase family. As to quaternary structure, homodimer.

The protein resides in the cytoplasm. The catalysed reaction is tRNA(His) + L-histidine + ATP = L-histidyl-tRNA(His) + AMP + diphosphate + H(+). The polypeptide is Histidine--tRNA ligase (Chlorobium chlorochromatii (strain CaD3)).